We begin with the raw amino-acid sequence, 351 residues long: Phosphoribosylformylglycinamidine cyclo-ligase (351 aa).

This sequence belongs to the AIR synthase family.

It localises to the cytoplasm. It carries out the reaction 2-formamido-N(1)-(5-O-phospho-beta-D-ribosyl)acetamidine + ATP = 5-amino-1-(5-phospho-beta-D-ribosyl)imidazole + ADP + phosphate + H(+). It functions in the pathway purine metabolism; IMP biosynthesis via de novo pathway; 5-amino-1-(5-phospho-D-ribosyl)imidazole from N(2)-formyl-N(1)-(5-phospho-D-ribosyl)glycinamide: step 2/2. The protein is Phosphoribosylformylglycinamidine cyclo-ligase of Xylella fastidiosa (strain 9a5c).